The sequence spans 719 residues: DNA ligase (719 aa).

Residues 42 to 46 (DAAYD), 92 to 93 (SL), and glutamate 126 contribute to the NAD(+) site. Lysine 128 acts as the N6-AMP-lysine intermediate in catalysis. Arginine 149, glutamate 185, lysine 301, and lysine 325 together coordinate NAD(+). Positions 430, 433, 448, and 454 each coordinate Zn(2+). The region spanning 640-719 (ATGSPVEGKT…DDWFKLVGED (80 aa)) is the BRCT domain.

Belongs to the NAD-dependent DNA ligase family. LigA subfamily. It depends on Mg(2+) as a cofactor. Mn(2+) serves as cofactor.

It carries out the reaction NAD(+) + (deoxyribonucleotide)n-3'-hydroxyl + 5'-phospho-(deoxyribonucleotide)m = (deoxyribonucleotide)n+m + AMP + beta-nicotinamide D-nucleotide.. Functionally, DNA ligase that catalyzes the formation of phosphodiester linkages between 5'-phosphoryl and 3'-hydroxyl groups in double-stranded DNA using NAD as a coenzyme and as the energy source for the reaction. It is essential for DNA replication and repair of damaged DNA. This Brucella melitensis biotype 1 (strain ATCC 23456 / CCUG 17765 / NCTC 10094 / 16M) protein is DNA ligase.